We begin with the raw amino-acid sequence, 280 residues long: 4-diphosphocytidyl-2-C-methyl-D-erythritol kinase (280 aa).

Lys8 is an active-site residue. Residue Pro91 to Thr101 participates in ATP binding. Residue Asp133 is part of the active site.

This sequence belongs to the GHMP kinase family. IspE subfamily.

It catalyses the reaction 4-CDP-2-C-methyl-D-erythritol + ATP = 4-CDP-2-C-methyl-D-erythritol 2-phosphate + ADP + H(+). Its pathway is isoprenoid biosynthesis; isopentenyl diphosphate biosynthesis via DXP pathway; isopentenyl diphosphate from 1-deoxy-D-xylulose 5-phosphate: step 3/6. In terms of biological role, catalyzes the phosphorylation of the position 2 hydroxy group of 4-diphosphocytidyl-2C-methyl-D-erythritol. This is 4-diphosphocytidyl-2-C-methyl-D-erythritol kinase from Clostridium botulinum (strain Loch Maree / Type A3).